A 251-amino-acid chain; its full sequence is 2,3-bisphosphoglycerate-dependent phosphoglycerate mutase (251 aa).

Substrate-binding positions include 11-18 (RHGNSDWN), 24-25 (TG), Arg-63, 90-93 (ERHY), Lys-101, 117-118 (RR), and 185-186 (GN). His-12 serves as the catalytic Tele-phosphohistidine intermediate. Residue Glu-90 is the Proton donor/acceptor of the active site.

This sequence belongs to the phosphoglycerate mutase family. BPG-dependent PGAM subfamily.

The enzyme catalyses (2R)-2-phosphoglycerate = (2R)-3-phosphoglycerate. It participates in carbohydrate degradation; glycolysis; pyruvate from D-glyceraldehyde 3-phosphate: step 3/5. Catalyzes the interconversion of 2-phosphoglycerate and 3-phosphoglycerate. The sequence is that of 2,3-bisphosphoglycerate-dependent phosphoglycerate mutase from Clavibacter sepedonicus (Clavibacter michiganensis subsp. sepedonicus).